Consider the following 99-residue polypeptide: Nucleoid-associated protein SSU98_0195 (99 aa).

This sequence belongs to the YbaB/EbfC family. In terms of assembly, homodimer.

Its subcellular location is the cytoplasm. The protein localises to the nucleoid. In terms of biological role, binds to DNA and alters its conformation. May be involved in regulation of gene expression, nucleoid organization and DNA protection. This chain is Nucleoid-associated protein SSU98_0195, found in Streptococcus suis (strain 98HAH33).